The primary structure comprises 93 residues: uncharacterized protein (93 aa).

The interval 41–62 is disordered; that stretch reads RSANRIPTTSSTSTSGTIPTTT. The span at 46–62 shows a compositional bias: low complexity; it reads IPTTSSTSTSGTIPTTT.

This is an uncharacterized protein from Dictyostelium discoideum (Social amoeba).